A 296-amino-acid polypeptide reads, in one-letter code: tRNA pseudouridine synthase B (296 aa).

D38 (nucleophile) is an active-site residue.

It belongs to the pseudouridine synthase TruB family. Type 1 subfamily.

It catalyses the reaction uridine(55) in tRNA = pseudouridine(55) in tRNA. Functionally, responsible for synthesis of pseudouridine from uracil-55 in the psi GC loop of transfer RNAs. The polypeptide is tRNA pseudouridine synthase B (Ehrlichia ruminantium (strain Gardel)).